The chain runs to 501 residues: Glycerol kinase (501 aa).

ADP is bound at residue Thr-14. Residues Thr-14, Thr-15, and Ser-16 each contribute to the ATP site. Residue Thr-14 participates in sn-glycerol 3-phosphate binding. An ADP-binding site is contributed by Arg-18. Sn-glycerol 3-phosphate contacts are provided by Arg-84, Glu-85, and Tyr-136. Positions 84, 85, and 136 each coordinate glycerol. Position 231 is a phosphohistidine; by HPr (His-231). Asp-245 contacts sn-glycerol 3-phosphate. Positions 245 and 246 each coordinate glycerol. The ADP site is built by Thr-267 and Gly-310. Residues Thr-267, Gly-310, Gln-314, and Gly-411 each coordinate ATP. Positions 411 and 415 each coordinate ADP.

Belongs to the FGGY kinase family. In terms of assembly, homotetramer and homodimer (in equilibrium). The phosphoenolpyruvate-dependent sugar phosphotransferase system (PTS), including enzyme I, and histidine-containing protein (HPr) are required for the phosphorylation of His-231, which leads to the activation of the enzyme.

It catalyses the reaction glycerol + ATP = sn-glycerol 3-phosphate + ADP + H(+). Its pathway is polyol metabolism; glycerol degradation via glycerol kinase pathway; sn-glycerol 3-phosphate from glycerol: step 1/1. With respect to regulation, activated by phosphorylation and inhibited by fructose 1,6-bisphosphate (FBP). Functionally, key enzyme in the regulation of glycerol uptake and metabolism. Catalyzes the phosphorylation of glycerol to yield sn-glycerol 3-phosphate. The chain is Glycerol kinase from Enterococcus faecalis (strain ATCC 700802 / V583).